Reading from the N-terminus, the 367-residue chain is 3-dehydroquinate synthase (367 aa).

NAD(+) is bound by residues 69–74 (DGEAFK), 103–107 (GVIGD), 127–128 (TT), Lys140, and Lys149. Zn(2+) contacts are provided by Glu182, His245, and His262.

This sequence belongs to the sugar phosphate cyclases superfamily. Dehydroquinate synthase family. It depends on Co(2+) as a cofactor. Zn(2+) serves as cofactor. Requires NAD(+) as cofactor.

It localises to the cytoplasm. It carries out the reaction 7-phospho-2-dehydro-3-deoxy-D-arabino-heptonate = 3-dehydroquinate + phosphate. It participates in metabolic intermediate biosynthesis; chorismate biosynthesis; chorismate from D-erythrose 4-phosphate and phosphoenolpyruvate: step 2/7. Catalyzes the conversion of 3-deoxy-D-arabino-heptulosonate 7-phosphate (DAHP) to dehydroquinate (DHQ). The protein is 3-dehydroquinate synthase of Pseudomonas savastanoi pv. phaseolicola (strain 1448A / Race 6) (Pseudomonas syringae pv. phaseolicola (strain 1448A / Race 6)).